The chain runs to 91 residues: Small ribosomal subunit protein uS19 (91 aa).

Belongs to the universal ribosomal protein uS19 family.

Functionally, protein S19 forms a complex with S13 that binds strongly to the 16S ribosomal RNA. The sequence is that of Small ribosomal subunit protein uS19 from Metamycoplasma hominis (strain ATCC 23114 / DSM 25592 / NBRC 14850 / NCTC 10111 / PG21) (Mycoplasma hominis).